Reading from the N-terminus, the 118-residue chain is Large ribosomal subunit protein bL20 (118 aa).

The protein belongs to the bacterial ribosomal protein bL20 family.

Its function is as follows. Binds directly to 23S ribosomal RNA and is necessary for the in vitro assembly process of the 50S ribosomal subunit. It is not involved in the protein synthesizing functions of that subunit. This chain is Large ribosomal subunit protein bL20, found in Trichodesmium erythraeum (strain IMS101).